The primary structure comprises 954 residues: MPWVEPKPRPGPEQKPKLTKPDSATGPQWYQESQESESEGKQPPPGPLAPPKSPEPSGPLASEQDAPLPEGDDAPPRPSMLDDAPRLPLELDDAPLPEEETPEPTAICRHRHRCHTDCLEGLLSRTFQWLGWQVGAHPWIFLLAPLMLTAALGTGFLYLPKDEEEDLEEHYTPVGSPAKAERRFVQGHFTTNDSYRFSASRRSTEANFVSLLVVSYSDSLLDPATFAEVSKLDGAVQDLRVAREKGSQIQYQQVCARYRALCVPPNPILYAWQVNKTLNLSSISFPAYNHGRHPLYLTGFFGGYILGGSLGMGQLLLRAKAMRLLYYLKTEDPEYDVQSKQWLTHLLDQFTNIKNILALKKIEVVHFTSLSRQLEFEATSVTVIPVFHLAYILIILFAVTSCFRFDCIRNKMCVAAFGVISAFLAVVSGFGLLLHIGVPFVIIVANSPFLILGVGVDDMFIMISAWHKTNLADDIRERMSNVYSKAAVSITITTITNILALYTGIMSSFRSVQCFCIYTGMTLLFCYFYNITCFGAFMALDGKREVVCLCWLKKADPKWPSFKKFCCFPFGSVPDEHGTDIHPISLFFRDYFGPFLTRSESKYFVVFIYVLYIISSIYGCFHVQEGLDLRNLASDDSYITPYFNVEENYFSDYGPRVMVIVTKKVDYWDKDVRQKLENCTKIFEKNVYVDKNLTEFWLDAYVQYLKGNSQDPNEKNTFMNNIPDFLSNFPNFQHDINISSSNEIISSRGFIQTTDVSSSAKKKILLFQLRRIAEDCQIPLMVYNQAFIYFDQYAAILEDTVRNVLVASAAMFIVSLLLIPYPLCSLWVTFAIGSVIVGVTGFMAFWKVNLDSISMINLVICIGFSFDFSVHISYAFVSSSQPSVNQKSVEALYLLGYPVLQSAISTIIGVCVLAAAKAYIFRTFFKIMFLVMIFGAAHGLIFIPVFLTFFGRFI.

Over residues 1–20 (MPWVEPKPRPGPEQKPKLTK) the composition is skewed to basic and acidic residues. The disordered stretch occupies residues 1–103 (MPWVEPKPRP…APLPEEETPE (103 aa)). Residues 42–57 (QPPPGPLAPPKSPEPS) show a composition bias toward pro residues. The span at 90–102 (ELDDAPLPEEETP) shows a compositional bias: acidic residues. Residues 139-159 (WIFLLAPLMLTAALGTGFLYL) traverse the membrane as a helical segment. 3 N-linked (GlcNAc...) asparagine glycosylation sites follow: asparagine 192, asparagine 275, and asparagine 279. A run of 7 helical transmembrane segments spans residues 297 to 317 (LTGF…QLLL), 383 to 403 (VIPV…TSCF), 423 to 443 (FLAV…FVII), 447 to 467 (SPFL…SAWH), 486 to 506 (AAVS…TGIM), 520 to 540 (GMTL…FMAL), and 603 to 623 (YFVV…CFHV). In terms of domain architecture, SSD spans 383-540 (VIPVFHLAYI…ITCFGAFMAL (158 aa)). N-linked (GlcNAc...) asparagine glycans are attached at residues asparagine 678, asparagine 692, and asparagine 737. The next 5 helical transmembrane spans lie at 804 to 824 (VLVA…YPLC), 826 to 846 (LWVT…MAFW), 858 to 878 (LVIC…AFVS), 894 to 914 (LLGY…CVLA), and 927 to 947 (IMFL…PVFL).

The protein belongs to the patched family. Expressed in germ cells of the testis (at protein level). Detected in blood lymph, colon, small intestine, ovary, testis, prostate, thymus and spleen with highest levels in testis.

It is found in the cell projection. The protein resides in the cilium. The protein localises to the flagellum membrane. It localises to the endoplasmic reticulum membrane. May play a role in sperm development or sperm function. However, does not appear to have an essential role in spermatogenesis or male fertility. The sequence is that of Patched domain-containing protein 3 (PTCHD3) from Homo sapiens (Human).